The following is a 471-amino-acid chain: Zinc finger protein 385B (471 aa).

Residues 1–93 are required for induction of apoptosis; sequence MNMANFLRGF…TGSTCHTTTL (93 aa). A Matrin-type 1 zinc finger spans residues 34 to 64; the sequence is SFCEVCNIQLNSAAQAQVHSNGKSHRKRVKQ. 2 disordered regions span residues 50–92 and 175–275; these read QVHS…HTTT and HYKG…TVVE. Positions 76 to 92 are enriched in low complexity; that stretch reads ASPSSNSSTGSTCHTTT. The tract at residues 94–471 is interaction with p53/TP53; sequence PALVRTPTLM…TPASILFAPY (378 aa). A Matrin-type 2 zinc finger spans residues 157-187; the sequence is ISCNVCQLRFNSDSQAEAHYKGSKHAKKVKA. The segment covering 206–220 has biased composition (polar residues); that stretch reads ANPSCSITPITGNNS. Residues 230–250 are compositionally biased toward low complexity; that stretch reads KASSSSQPSSSESGSFLLKSG. Polar residues predominate over residues 260–269; that stretch reads TSPSKSTNGA. The Matrin-type 3 zinc finger occupies 282 to 316; that stretch reads KKLLYCSLCKVAVNSLSQLEAHNTGSKHKTMVEAR. Residues 318–340 form a disordered region; sequence GAGPIKSYPRPGSRLKMQNGSKG. A Matrin-type 4 zinc finger spans residues 348-378; it reads FHCEICDVHVNSEIQLKQHISSRRHKDRVAG.

Interacts with p53/TP53; the interaction is direct. In terms of tissue distribution, detected in germinal center of lymph node (at protein level). Expressed in spleen, lymph node and tonsil.

The protein localises to the nucleus. May play a role in p53/TP53-mediated apoptosis. The protein is Zinc finger protein 385B (ZNF385B) of Homo sapiens (Human).